The chain runs to 145 residues: Large ribosomal subunit protein uL13 (145 aa).

It belongs to the universal ribosomal protein uL13 family. As to quaternary structure, part of the 50S ribosomal subunit.

This protein is one of the early assembly proteins of the 50S ribosomal subunit, although it is not seen to bind rRNA by itself. It is important during the early stages of 50S assembly. In Staphylococcus haemolyticus (strain JCSC1435), this protein is Large ribosomal subunit protein uL13.